The sequence spans 307 residues: CRISPR-associated endonuclease Cas1 2 (307 aa).

Residues Glu142, His206, and Glu221 each coordinate Mn(2+).

This sequence belongs to the CRISPR-associated endonuclease Cas1 family. In terms of assembly, homodimer, forms a heterotetramer with a Cas2 homodimer. Forms oligomers, probably binds nucleic acids as a homodimer. Mg(2+) serves as cofactor. Mn(2+) is required as a cofactor.

CRISPR (clustered regularly interspaced short palindromic repeat), is an adaptive immune system that provides protection against mobile genetic elements (viruses, transposable elements and conjugative plasmids). CRISPR clusters contain spacers, sequences complementary to antecedent mobile elements, and target invading nucleic acids. CRISPR clusters are transcribed and processed into CRISPR RNA (crRNA). Acts as a dsDNA endonuclease. Involved in the integration of spacer DNA into the CRISPR cassette. Its function is as follows. In vitro catalyzes a concerted transesterification reaction on branched DNA, as would be expected during integration of protospacers into the CRISPR leader sequence; Cas2 is not required in vitro. This reaction requires a 3'-OH group at the branch point. Binds ss- and dsDNA and ss- and dsRNA with approximately equal affinity. May be able to anneal complementary DNA strands. The sequence is that of CRISPR-associated endonuclease Cas1 2 from Saccharolobus solfataricus (strain ATCC 35092 / DSM 1617 / JCM 11322 / P2) (Sulfolobus solfataricus).